A 945-amino-acid polypeptide reads, in one-letter code: Collagen-like protein 1 (945 aa).

2 disordered regions span residues serine 80 to leucine 226 and glycine 257 to glutamate 441. Collagen-like domains follow at residues glycine 83 to lysine 142 and glycine 146 to lysine 205. Composition is skewed to basic and acidic residues over residues glutamine 109–glutamine 145 and aspartate 168–lysine 208. An N-linked (GlcNAc...) asparagine; by host glycan is attached at asparagine 211. 5 consecutive Collagen-like domains span residues glycine 257 to lysine 376, glycine 383 to asparagine 442, glycine 488 to lysine 547, glycine 554 to valine 613, and glycine 635 to serine 694. Residue asparagine 442 is glycosylated (N-linked (GlcNAc...) asparagine; by host). Over residues glycine 488 to aspartate 687 the composition is skewed to basic and acidic residues. Positions glycine 488 to serine 712 are disordered. Positions serine 703–serine 712 are enriched in polar residues. An N-linked (GlcNAc...) asparagine; by host glycan is attached at asparagine 716. Positions threonine 733–serine 768 are disordered. A compositionally biased stretch (basic and acidic residues) spans lysine 736 to threonine 754. Low complexity predominate over residues aspartate 756–threonine 765.

May be hydroxylated on lysine by the viral-encoded procollagen-lysine,2-oxoglutarate 5-dioxygenase.

It localises to the virion. Functionally, may participate in the formation of a layer of cross-linked glycosylated fibrils at the viral surface thus giving it a hairy-like appearance. The polypeptide is Collagen-like protein 1 (Acanthamoeba polyphaga mimivirus (APMV)).